Consider the following 693-residue polypeptide: Polyphosphate kinase (693 aa).

Position 57 (N57) interacts with ATP. 2 residues coordinate Mg(2+): R383 and R413. H443 acts as the Phosphohistidine intermediate in catalysis. ATP contacts are provided by Y476, R572, and H601.

Belongs to the polyphosphate kinase 1 (PPK1) family. It depends on Mg(2+) as a cofactor. An intermediate of this reaction is the autophosphorylated ppk in which a phosphate is covalently linked to a histidine residue through a N-P bond.

It carries out the reaction [phosphate](n) + ATP = [phosphate](n+1) + ADP. Its function is as follows. Catalyzes the reversible transfer of the terminal phosphate of ATP to form a long-chain polyphosphate (polyP). The protein is Polyphosphate kinase of Acinetobacter baumannii (strain ATCC 17978 / DSM 105126 / CIP 53.77 / LMG 1025 / NCDC KC755 / 5377).